Here is a 425-residue protein sequence, read N- to C-terminus: Stabilizer of axonemal microtubules 4 (425 aa).

3 disordered regions span residues 93 to 126, 203 to 225, and 316 to 335; these read PLEV…PPTK, EGSG…SQAL, and KEPT…PCDP. Over residues 207-222 the composition is skewed to polar residues; it reads FTKQSHQSPIVFQPPS.

In terms of assembly, microtubule inner protein component of sperm flagellar doublet microtubules. Interacts with PPP1CA.

The protein localises to the cell projection. It localises to the cilium. Its subcellular location is the cytoplasm. The protein resides in the cytoskeleton. It is found in the flagellum axoneme. In Homo sapiens (Human), this protein is Stabilizer of axonemal microtubules 4.